The sequence spans 714 residues: VIN3-like protein 2 (714 aa).

The PHD-type zinc finger occupies 164-232; the sequence is RCSCCICRKY…CFYCVSCGKA (69 aa). Residues 239-246 carry the Nuclear localization signal motif; that stretch reads WKKQLTIA. The Fibronectin type-III domain maps to 366 to 463; that stretch reads GSTKIRFEDV…INVLTRSAEE (98 aa). Over residues 478-498 the composition is skewed to polar residues; sequence LTNCSTLSSNPSSVEAESNND. Residues 478 to 530 are disordered; sequence LTNCSTLSSNPSSVEAESNNDYIVPKKPSSKNEDNNSPSVDESAAKRMKRTTD. The segment at 602–714 is VIN3-Interacting Domain (VID); the sequence is SMKDNCNNGD…PSGFCMKLWH (113 aa).

As to quaternary structure, self-interacts. Interacts with VIN3 and VIL1. Component of the plant homeodomain / polycomb repressive complex 2 (PHD-PRC2) large complex during prolonged cold, composed of core PRC2 components (VRN2, EZA1, FIE and MSI1), and three related PHD finger proteins (VIL1, VIL2 and VIN3) that mediates histone H3 trimethylation on 'Lys-27' (H3K27me3).

The protein resides in the nucleus. In terms of biological role, maybe involved in both the vernalization and photoperiod pathways by regulating gene expression. Binds preferentially to dimethylated histone H3 'Lys-9' (H3K9me2). Promotes flowering in non-inductive photoperiods (e.g. short days) through the maintenance of the epigenetically repressed state of MAF5 via H3K9me2 and plant homeodomain / polycomb repressive complex 2 (PHD-PRC2)-dependent H3K27me3. The sequence is that of VIN3-like protein 2 (VIL2) from Arabidopsis thaliana (Mouse-ear cress).